We begin with the raw amino-acid sequence, 440 residues long: Chromosome partition protein MukF (440 aa).

The leucine-zipper stretch occupies residues 208-236 (LSETSGTLRELQDTLEAAGDKLQANLLRI).

This sequence belongs to the MukF family. Interacts, and probably forms a ternary complex, with MukE and MukB via its C-terminal region. The complex formation is stimulated by calcium or magnesium. It is required for an interaction between MukE and MukB.

Its subcellular location is the cytoplasm. The protein localises to the nucleoid. Functionally, involved in chromosome condensation, segregation and cell cycle progression. May participate in facilitating chromosome segregation by condensation DNA from both sides of a centrally located replisome during cell division. Not required for mini-F plasmid partitioning. Probably acts via its interaction with MukB and MukE. Overexpression results in anucleate cells. It has a calcium binding activity. In Salmonella paratyphi B (strain ATCC BAA-1250 / SPB7), this protein is Chromosome partition protein MukF.